The following is a 602-amino-acid chain: Trichothecene efflux pump TRI12 (602 aa).

Transmembrane regions (helical) follow at residues Leu-49 to Ile-69, Asn-77 to Gly-97, Gly-107 to Phe-127, and Ile-134 to Ile-154. Asn-160 carries N-linked (GlcNAc...) asparagine glycosylation. The next 11 membrane-spanning stretches (helical) occupy residues Phe-164–Ile-184, Trp-196–Tyr-216, Trp-240–Gly-260, Ile-271–Tyr-291, Pro-297–Ile-317, Ser-355–Phe-375, Trp-380–Asn-400, Ile-408–Leu-428, Ala-450–Gly-470, Trp-484–Gln-504, and Ala-532–Ala-552. N-linked (GlcNAc...) asparagine glycosylation occurs at Asn-590.

It belongs to the major facilitator superfamily.

The protein resides in the cell membrane. Its function is as follows. Efflux pump that provides the dual role of trichothecene export and self-protection by allowing the fungus to evade the harmful effect of its own trichothecene production. This Trichoderma arundinaceum protein is Trichothecene efflux pump TRI12.